We begin with the raw amino-acid sequence, 277 residues long: Release factor glutamine methyltransferase (277 aa).

S-adenosyl-L-methionine is bound by residues 119 to 123 (GTGTG), Asp142, and Asn184. 184–187 (NPPY) lines the substrate pocket.

This sequence belongs to the protein N5-glutamine methyltransferase family. PrmC subfamily.

It carries out the reaction L-glutaminyl-[peptide chain release factor] + S-adenosyl-L-methionine = N(5)-methyl-L-glutaminyl-[peptide chain release factor] + S-adenosyl-L-homocysteine + H(+). Its function is as follows. Methylates the class 1 translation termination release factors RF1/PrfA and RF2/PrfB on the glutamine residue of the universally conserved GGQ motif. This chain is Release factor glutamine methyltransferase, found in Enterococcus faecalis (strain ATCC 700802 / V583).